The primary structure comprises 126 residues: Holo-[acyl-carrier-protein] synthase (126 aa).

Mg(2+) is bound by residues Asp8 and Glu57.

The protein belongs to the P-Pant transferase superfamily. AcpS family. Mg(2+) serves as cofactor.

Its subcellular location is the cytoplasm. The enzyme catalyses apo-[ACP] + CoA = holo-[ACP] + adenosine 3',5'-bisphosphate + H(+). In terms of biological role, transfers the 4'-phosphopantetheine moiety from coenzyme A to a Ser of acyl-carrier-protein. The chain is Holo-[acyl-carrier-protein] synthase from Halorhodospira halophila (strain DSM 244 / SL1) (Ectothiorhodospira halophila (strain DSM 244 / SL1)).